The sequence spans 826 residues: Dolichyl-diphosphooligosaccharide--protein glycosyltransferase subunit STT3B (826 aa).

The interval 1-60 is disordered; that stretch reads MAEPSAPESKHKSSLNSSPWSGLMALGNSRHGHHGPGAQCAHKAAGGAAPPKPAPAGLSG. Residue Ala-2 is modified to N-acetylalanine. Over 2–41 the chain is Cytoplasmic; sequence AEPSAPESKHKSSLNSSPWSGLMALGNSRHGHHGPGAQCA. 3 positions are modified to phosphoserine: Ser-13, Ser-18, and Ser-29. Over residues 37 to 49 the composition is skewed to low complexity; that stretch reads GAQCAHKAAGGAA. The chain crosses the membrane as a helical span at residues 42–86; the sequence is HKAAGGAAPPKPAPAGLSGGLSQPAGWQSLLSFTILFLAWLAGFS. At 87-173 the chain is on the lumenal side; it reads SRLFAVIRFE…VHIRDVCVFL (87 aa). The DXD motif 1 motif lies at 101–103; the sequence is EFD. Asp-103 contacts Mn(2+). The chain crosses the membrane as a helical span at residues 174-192; that stretch reads APTFSGLTSISTFLLTREL. At 193 to 194 the chain is on the cytoplasmic side; that stretch reads WN. The chain crosses the membrane as a helical span at residues 195–212; sequence QGAGLLAACFIAIVPGYI. Residues 213 to 223 lie on the Lumenal side of the membrane; it reads SRSVAGSFDNE. Mn(2+) contacts are provided by Asp-221 and Glu-223. A DXD motif 2 motif is present at residues 221–223; it reads DNE. The chain crosses the membrane as a helical span at residues 224–243; that stretch reads GIAIFALQFTYYLWVKSVKT. At 244 to 245 the chain is on the cytoplasmic side; that stretch reads GS. A helical membrane pass occupies residues 246 to 260; it reads VFWTMCCCLSYFYMV. Over 261–265 the chain is Lumenal; the sequence is SAWGG. The chain crosses the membrane as a helical span at residues 266–282; the sequence is YVFIINLIPLHVFVLLL. Residues 283-287 lie on the Cytoplasmic side of the membrane; the sequence is MQRYS. The helical transmembrane segment at 288–313 threads the bilayer; sequence KRVYIAYSTFYIVGLILSMQIPFVGF. Topologically, residues 314 to 321 are lumenal; the sequence is QPIRTSEH. A helical membrane pass occupies residues 322-341; that stretch reads MAAAGVFALLQAYAFLQYLR. At 342–350 the chain is on the cytoplasmic side; sequence DRLTKQEFQ. Residues 351-371 traverse the membrane as a helical segment; sequence TLFFLGVSLAAGAVFLSVIYL. Residues 372-410 lie on the Lumenal side of the membrane; it reads TYTGYIAPWSGRFYSLWDTGYAKIHIPIIASVSEHQPTT. An SVSE motif motif is present at residues 402-405; sequence SVSE. A helical membrane pass occupies residues 411-433; that stretch reads WVSFFFDLHILVCTFPAGLWFCI. Residues 434–439 lie on the Cytoplasmic side of the membrane; it reads KNINDE. The chain crosses the membrane as a helical span at residues 440–456; that stretch reads RVFVALYAISAVYFAGV. Topologically, residues 457 to 460 are lumenal; that stretch reads MVRL. Residue Arg-459 participates in dolichyl diphosphooligosaccharide binding. The chain crosses the membrane as a helical span at residues 461–482; it reads MLTLTPVVCMLSAIAFSNVFEH. The Cytoplasmic segment spans residues 483–526; that stretch reads YLGDDMKRENPPVEDSSDEDDKRNQGNLYDKAGKVRKHATEQEK. The segment at 490–509 is disordered; sequence RENPPVEDSSDEDDKRNQGN. Residues Ser-498 and Ser-499 each carry the phosphoserine modification. The helical transmembrane segment at 527 to 552 threads the bilayer; the sequence is TEEGLGPNIKSIVTMLMLMLLMMFAV. The Lumenal segment spans residues 553-826; it reads HCTWVTSNAY…KGKKISKKTV (274 aa). The interval 604–606 is interacts with target acceptor peptide in protein substrate; the sequence is WWD. A WWDYG motif motif is present at residues 604–608; sequence WWDYG. Residue Tyr-609 coordinates dolichyl diphosphooligosaccharide. Asn-616 and Asn-623 each carry an N-linked (GlcNAc...) asparagine glycan. Asn-627 carries an N-linked (GlcNAc...) (high mannose) asparagine glycan. The N-linked (GlcNAc...) asparagine glycan is linked to Asn-641. A DK motif motif is present at residues 671-678; the sequence is DINKFLWM.

The protein belongs to the STT3 family. As to quaternary structure, component of the oligosaccharyltransferase (OST) complex. There are 2 OST complexes, OST-A and OST-B, which contain STT3A or STT3B as catalytic subunit, respectively. OST-A and OST-B contain common core subunits RPN1, RPN2, OST48, OST4, DAD1 and TMEM258, and OST-B contains either MAGT1 or TUSC3 as specific accessory subunit. Mg(2+) serves as cofactor. Mn(2+) is required as a cofactor. As to expression, expressed in heart, brain, placenta, lung, liver, muscle, kidney and pancreas. Expressed in skin fibroblasts (at protein level).

The protein localises to the endoplasmic reticulum. It localises to the endoplasmic reticulum membrane. It catalyses the reaction a di-trans,poly-cis-dolichyl diphosphooligosaccharide + L-asparaginyl-[protein] = N(4)-(oligosaccharide-(1-&gt;4)-N-acetyl-beta-D-glucosaminyl-(1-&gt;4)-N-acetyl-beta-D-glucosaminyl)-L-asparaginyl-[protein] + a di-trans,poly-cis-dolichyl diphosphate + H(+). It participates in protein modification; protein glycosylation. In terms of biological role, catalytic subunit of the oligosaccharyl transferase (OST) complex that catalyzes the initial transfer of a defined glycan (Glc(3)Man(9)GlcNAc(2) in eukaryotes) from the lipid carrier dolichol-pyrophosphate to an asparagine residue within an Asn-X-Ser/Thr consensus motif in nascent polypeptide chains, the first step in protein N-glycosylation. N-glycosylation occurs cotranslationally and the complex associates with the Sec61 complex at the channel-forming translocon complex that mediates protein translocation across the endoplasmic reticulum (ER). All subunits are required for a maximal enzyme activity. This subunit contains the active site and the acceptor peptide and donor lipid-linked oligosaccharide (LLO) binding pockets. STT3B is present in a small subset of OST complexes (OST-B) and mediates both cotranslational and post-translational N-glycosylation of target proteins: STT3B-containing complexes are required for efficient post-translational glycosylation and while they are less competent than STT3A-containing complexes for cotranslational glycosylation, they have the ability to mediate glycosylation of some nascent sites that are not accessible for STT3A. STT3B-containing complexes also act post-translationally and mediate modification of skipped glycosylation sites in unfolded proteins. Plays a role in ER-associated degradation (ERAD) pathway that mediates ubiquitin-dependent degradation of misfolded endoplasmic reticulum proteins by mediating N-glycosylation of unfolded proteins, which are then recognized by the ERAD pathway and targeted for degradation. Mediates glycosylation of the disease variant AMYL-TTR 'Asp-38' of TTR at 'Asn-118', leading to its degradation. The sequence is that of Dolichyl-diphosphooligosaccharide--protein glycosyltransferase subunit STT3B from Homo sapiens (Human).